Consider the following 142-residue polypeptide: Hemoglobin subunit alpha-1 (142 aa).

Ser1 carries the N-acetylserine modification. In terms of domain architecture, Globin spans 1–142 (SLSDKDKAAV…VALALAERYR (142 aa)). Residue His59 coordinates O2. Residue His88 participates in heme b binding.

This sequence belongs to the globin family. In terms of assembly, hb1 is a heterotetramer of two alpha-2 chains and two beta chains, while Hb2 is a heterotetramer of two alpha-2 chains and two beta chains. In terms of tissue distribution, red blood cells.

Functionally, involved in oxygen transport from gills to the various peripheral tissues. This Notothenia angustata (Rockcod) protein is Hemoglobin subunit alpha-1 (hba1).